The sequence spans 507 residues: MFS-type transporter acdC (507 aa).

The interval 1–50 (MSPNAPAVDIGAAPSLDTPEGDTKQPAEDHVEKDSNLVDWDGPDDPEHPQ) is disordered. Basic and acidic residues predominate over residues 21–36 (GDTKQPAEDHVEKDSN). A glycan (N-linked (GlcNAc...) asparagine) is linked at asparagine 51. Residues 58 to 78 (WGITFSLASMTMWITFSSSVL) traverse the membrane as a helical segment. Asparagine 90 is a glycosylation site (N-linked (GlcNAc...) asparagine). 5 consecutive transmembrane segments (helical) span residues 95–115 (VMPLATTLVIFGFALGPLCWA), 125–145 (LPTFLGYGVFAIFQVPVAVAP), 155–175 (FFVGVFGSSALSVGPGVMADI), 186–206 (PFFFAANLLGPILGPIIGGFI), and 215–235 (WTAWLTLITSIFFGVLALLIV). Residue asparagine 257 is glycosylated (N-linked (GlcNAc...) asparagine). A run of 6 helical transmembrane segments spans residues 290 to 310 (PILICFTVYLSLIYGILYLFL), 328 to 348 (IAGLPFLGILVGMVLGIGIII), 371 to 391 (LVEMMLTSITMPIGLFWFGWA), 395 to 415 (HWMVQTIAGVPLGIGLFVLFM), 442 to 462 (FLGGSFPLFATAMYHNLGVDW), and 466 to 486 (ILGFISVAMVPIPFAFYIFGA).

It belongs to the major facilitator superfamily. CAR1 family.

The protein resides in the membrane. Functionally, MFS-type transporter; part of the gene cluster that mediates the biosynthesis of aspcandine, a pyrrolobenzazepine alkaloid. The sequence is that of MFS-type transporter acdC from Aspergillus candidus.